A 545-amino-acid chain; its full sequence is Glucose-6-phosphate isomerase (545 aa).

Glu-353 acts as the Proton donor in catalysis. Catalysis depends on residues His-384 and Lys-510.

The protein belongs to the GPI family.

The protein localises to the cytoplasm. The catalysed reaction is alpha-D-glucose 6-phosphate = beta-D-fructose 6-phosphate. It participates in carbohydrate biosynthesis; gluconeogenesis. The protein operates within carbohydrate degradation; glycolysis; D-glyceraldehyde 3-phosphate and glycerone phosphate from D-glucose: step 2/4. Functionally, catalyzes the reversible isomerization of glucose-6-phosphate to fructose-6-phosphate. This Aromatoleum aromaticum (strain DSM 19018 / LMG 30748 / EbN1) (Azoarcus sp. (strain EbN1)) protein is Glucose-6-phosphate isomerase.